The primary structure comprises 258 residues: RBPJ-interacting and tubulin-associated protein 1 (258 aa).

Disordered regions lie at residues 28 to 86 (FGSP…PRKK), 132 to 182 (TPPA…APRS), and 195 to 258 (AVPS…PPWK). Residues 71-81 (SPSSRGSTPNL) show a composition bias toward polar residues. A Nuclear localization signal motif is present at residues 81–97 (LTPRKKNKYRLIGHTPS). Positions 117 to 145 (RTAVEDAAKLRTLFWTPPATPRGSHSPRP) are interaction with RBPJ/RBPSUH. The segment at 145-258 (PRETPLRAIH…CPQKPKPPWK (114 aa)) is interaction with tubulin. Polar residues-rich tracts occupy residues 201 to 212 (HPASTAPQTNGP) and 236 to 245 (GSVSGPTTPQ).

This sequence belongs to the RITA family. In terms of assembly, interacts with RBPJ/RBPSUH.

It localises to the cytoplasm. It is found in the nucleus. The protein localises to the cytoskeleton. The protein resides in the microtubule organizing center. Its subcellular location is the centrosome. Functionally, tubulin-binding protein that acts as a negative regulator of Notch signaling pathway. Shuttles between the cytoplasm and the nucleus and mediates the nuclear export of RBPJ/RBPSUH, thereby preventing the interaction between RBPJ/RBPSUH and NICD product of Notch proteins (Notch intracellular domain), leading to down-regulate Notch-mediated transcription. May play a role in neurogenesis. This chain is RBPJ-interacting and tubulin-associated protein 1 (Rita1), found in Rattus norvegicus (Rat).